We begin with the raw amino-acid sequence, 122 residues long: Large ribosomal subunit protein uL14 (122 aa).

The protein belongs to the universal ribosomal protein uL14 family. As to quaternary structure, part of the 50S ribosomal subunit. Forms a cluster with proteins L3 and L19. In the 70S ribosome, L14 and L19 interact and together make contacts with the 16S rRNA in bridges B5 and B8.

In terms of biological role, binds to 23S rRNA. Forms part of two intersubunit bridges in the 70S ribosome. This is Large ribosomal subunit protein uL14 from Aeromonas salmonicida (strain A449).